Reading from the N-terminus, the 420-residue chain is Glutamyl-tRNA reductase (420 aa).

Substrate is bound by residues 49–52 (TCNR), S109, 114–116 (EPQ), and Q120. C50 (nucleophile) is an active-site residue. NADP(+) is bound at residue 189 to 194 (GAGETI).

This sequence belongs to the glutamyl-tRNA reductase family. Homodimer.

It catalyses the reaction (S)-4-amino-5-oxopentanoate + tRNA(Glu) + NADP(+) = L-glutamyl-tRNA(Glu) + NADPH + H(+). It functions in the pathway porphyrin-containing compound metabolism; protoporphyrin-IX biosynthesis; 5-aminolevulinate from L-glutamyl-tRNA(Glu): step 1/2. In terms of biological role, catalyzes the NADPH-dependent reduction of glutamyl-tRNA(Glu) to glutamate 1-semialdehyde (GSA). This chain is Glutamyl-tRNA reductase, found in Yersinia enterocolitica serotype O:8 / biotype 1B (strain NCTC 13174 / 8081).